The sequence spans 244 residues: 1-(5-phosphoribosyl)-5-[(5-phosphoribosylamino)methylideneamino] imidazole-4-carboxamide isomerase (244 aa).

Aspartate 8 (proton acceptor) is an active-site residue. Aspartate 129 serves as the catalytic Proton donor.

The protein belongs to the HisA/HisF family.

Its subcellular location is the cytoplasm. The enzyme catalyses 1-(5-phospho-beta-D-ribosyl)-5-[(5-phospho-beta-D-ribosylamino)methylideneamino]imidazole-4-carboxamide = 5-[(5-phospho-1-deoxy-D-ribulos-1-ylimino)methylamino]-1-(5-phospho-beta-D-ribosyl)imidazole-4-carboxamide. It participates in amino-acid biosynthesis; L-histidine biosynthesis; L-histidine from 5-phospho-alpha-D-ribose 1-diphosphate: step 4/9. The protein is 1-(5-phosphoribosyl)-5-[(5-phosphoribosylamino)methylideneamino] imidazole-4-carboxamide isomerase of Geobacter sulfurreducens (strain ATCC 51573 / DSM 12127 / PCA).